A 2227-amino-acid chain; its full sequence is Genome polyprotein (2227 aa).

2 consecutive short sequence motifs ((L)YPX(n)L motif) follow at residues 167-171 (YPHGL) and 200-205 (YPVWEL). Residues 766–836 (MMSRIAAGDL…PRKMKGVFSQ (71 aa)) form an involved in P1-2A pentamerization region. A helical membrane pass occupies residues 1011 to 1031 (TVEIINTVLCFVKSGILLYVI). Positions 1043–1070 (IGLLRVMNYVDIGCSVISCGKVFSKMLE) are membrane-penetrating ability. Positions 1127-1155 (KKKDVLNILKDNRQKIEKAIEEADNLCIL) form a coiled coil. The region spanning 1204–1366 (HQKLKNLGSI…SFFKNPHNDM (163 aa)) is the SF3 helicase domain. 1230-1237 (GKRGGGKS) is a binding site for ATP. The chain crosses the membrane as a helical span at residues 1462-1482 (WVAVGAAVGILGVLVAGWFVY). The residue at position 1499 (Tyr-1499) is an O-(5'-phospho-RNA)-tyrosine. One can recognise a Peptidase C3 domain in the interval 1514 to 1728 (DPVESQSPLE…VAKLVTQEMF (215 aa)). Catalysis depends on for protease 3C activity residues His-1563, Asp-1603, and Cys-1691. The 122-residue stretch at 1976 to 2097 (DVGLDLDFSA…VFSRDVQIDN (122 aa)) folds into the RdRp catalytic domain.

It belongs to the picornaviridae polyprotein family. In terms of assembly, homodimer. Homomultimer; probably interacts with membranes in a multimeric form. Seems to assemble into amyloid-like fibers. As to quaternary structure, homodimer. Monomer. Interacts with protein 3CD. Interacts with host ACBD3. In terms of assembly, interacts with protein 3AB. As to quaternary structure, interacts with human MAVS. Homodimer; disulfide-linked. In terms of assembly, homopentamer. Homooligomer. As to quaternary structure, interacts with capsid protein VP2. Interacts with capsid protein VP3. Interacts with capsid protein VP1. Interacts with capsid protein VP3. In terms of assembly, interacts with capsid protein VP1. Interacts with capsid protein VP2. Specific enzymatic cleavages by viral protease in vivo yield a variety of precursors and mature proteins. Polyprotein processing intermediates are produced, such as P1-2A which is a functional precursor of the structural proteins, VP0 which is a VP4-VP2 precursor, VP1-2A precursor, 3ABC precursor which is a stable and catalytically active precursor of 3A, 3B and 3C proteins, 3AB and 3CD precursors. The assembly signal 2A is removed from VP1-2A by a host protease, possibly host Cathepsin L. This cleavage occurs over a region of 3 amino-acids probably generating VP1 proteins with heterogeneous C-termini. In terms of processing, during virion maturation, immature virions are rendered infectious following cleavage of VP0 into VP4 and VP2. This maturation seems to be an autocatalytic event triggered by the presence of RNA in the capsid and is followed by a conformational change of the particle. Post-translationally, the assembly signal 2A is removed from VP1-2A by a host protease, possibly host Cathepsin L in naked virions. This cleavage does not occur in enveloped virions. This cleavage occurs over a region of 3 amino-acids probably generating VP1 proteins with heterogeneous C-termini. VPg is uridylylated prior to priming replication into VPg-pUpU. In terms of processing, unlike other picornaviruses, does not seem to be myristoylated.

It is found in the virion. The protein resides in the host endosome. Its subcellular location is the host multivesicular body. The protein localises to the host membrane. It localises to the host mitochondrion outer membrane. It is found in the host cytoplasm. The protein resides in the host cytoplasmic vesicle membrane. It catalyses the reaction RNA(n) + a ribonucleoside 5'-triphosphate = RNA(n+1) + diphosphate. It carries out the reaction a ribonucleoside 5'-triphosphate + H2O = a ribonucleoside 5'-diphosphate + phosphate + H(+). The enzyme catalyses Selective cleavage of Gln-|-Gly bond in the poliovirus polyprotein. In other picornavirus reactions Glu may be substituted for Gln, and Ser or Thr for Gly.. Its function is as follows. Capsid proteins VP1, VP2, and VP3 form a closed capsid enclosing the viral positive strand RNA genome. All these proteins contain a beta-sheet structure called beta-barrel jelly roll. Together they form an icosahedral capsid (T=3) composed of 60 copies of each VP1, VP2, and VP3, with a diameter of approximately 300 Angstroms. VP1 is situated at the 12 fivefold axes, whereas VP2 and VP3 are located at the quasi-sixfold axes. The naked capsid interacts with the host receptor HAVCR1 to provide virion attachment to and probably entry into the target cell. Functionally, VP0 precursor is a component of the immature procapsids. Plays a role in the assembly of the 12 pentamers into an icosahedral structure. Has not been detected in mature virions, supposedly owing to its small size. In terms of biological role, precursor component of immature procapsids that corresponds to an extended form of the structural protein VP1. After maturation, possibly by the host Cathepsin L, the assembly signal 2A is cleaved to give rise to the mature VP1 protein. Its function is as follows. Functions as a viroporin. Affects membrane integrity and causes an increase in membrane permeability. Involved in host intracellular membrane rearrangements probably to give rise to the viral factories. Does not disrupt calcium homeostasis or glycoprotein trafficking. Antagonizes the innate immune response of the host by suppressing IFN-beta synthesis, which it achieves by interfering with the RIG-I/IFIH1 pathway. Functionally, affects membrane integrity and causes an increase in membrane permeability. Associates with and induces structural rearrangements of intracellular membranes. Displays RNA-binding activity. In terms of biological role, the precursor 3ABC is targeted to the mitochondrial membrane where protease 3C activity cleaves and inhibits the host antiviral protein MAVS, thereby disrupting activation of IRF3 through the IFIH1/MDA5 pathway. In vivo, the protease activity of 3ABC precursor is more efficient in cleaving the 2BC precursor than that of protein 3C. The 3ABC precursor may therefore play a role in the proteolytic processing of the polyprotein. Possible viroporin. Its function is as follows. Interacts with the 3CD precursor and with RNA structures found at both the 5'- and 3'-termini of the viral genome. Since the 3AB precursor contains the hydrophobic domain 3A, it probably anchors the whole viral replicase complex to intracellular membranes on which viral RNA synthesis occurs. Functionally, may serve as membrane anchor to the 3AB and 3ABC precursors via its hydrophobic domain. May interact with RNA. Acts as a primer for viral RNA replication and remains covalently bound to viral genomic RNA. VPg is uridylylated prior to priming replication into VPg-pUpU. The VPg-pUpU is then used as primer on the genomic RNA poly(A) by the RNA-dependent RNA polymerase to replicate the viral genome. In terms of biological role, cysteine protease that generates mature viral proteins from the precursor polyprotein. In addition to its proteolytic activity, it binds to viral RNA, and thus influences viral genome replication. RNA and substrate bind cooperatively to the protease. Cleaves IKBKG/NEMO to impair innate immune signaling. Cleaves host PABPC1 which may participate in the switch of viral translation to RNA synthesis. Its function is as follows. Interacts with the 3AB precursor and with RNA structures found at both the 5'- and 3'-termini of the viral genome. Disrupts TLR3 signaling by degrading the host adapter protein TICAM1/TRIF. Functionally, RNA-directed RNA polymerase 3D-POL replicates genomic and antigenomic RNA by recognizing replications specific signals. This chain is Genome polyprotein, found in Homo sapiens (Human).